The chain runs to 318 residues: Solute carrier family 25 member 34 (318 aa).

Solcar repeat units follow at residues 18–111 (VSPA…ACQA), 115–208 (QQPG…AKAW), and 218–309 (DSWL…LRKL). 6 helical membrane-spanning segments follow: residues 21–41 (AVDL…TNPL), 59–79 (TYPR…RADG), 112–134 (GLTQ…GAFV), 184–205 (VGAA…FTSA), 220–240 (WLAT…VMAP), and 292–315 (LGPH…RAQH).

Belongs to the mitochondrial carrier (TC 2.A.29) family.

It is found in the mitochondrion inner membrane. It catalyses the reaction a dicarboxylate(in) + sulfate(out) = a dicarboxylate(out) + sulfate(in). Putative antiporter that exchanges dicarboxylates and sulfur oxoanions across the inner membrane of mitochondria. This chain is Solute carrier family 25 member 34 (Slc25a34), found in Rattus norvegicus (Rat).